Reading from the N-terminus, the 848-residue chain is Dolabradiene synthase KSL4, chloroplastic (848 aa).

The transit peptide at 1 to 64 directs the protein to the chloroplast; that stretch reads MASLSFASSH…SRMPRNVDTH (64 aa). Residues 148–168 are disordered; that stretch reads QRSDGSWGPDGGSGDHPSSPL. Asp597, Asp601, Asn742, Ser746, and Glu750 together coordinate Mg(2+). A DDXXD motif motif is present at residues 597 to 601; the sequence is DDLFD.

This sequence belongs to the terpene synthase family. Mg(2+) serves as cofactor.

Its subcellular location is the plastid. It is found in the chloroplast. It carries out the reaction ent-copalyl diphosphate = dolabradiene + diphosphate. In terms of biological role, involved in the production of antifungal dolabralexin phytoalexins in response to biotic and abiotic stresses. In response to fungal infection and in associtation with AN2, is involved in the production dolabradiene, a type of antifungal phytoalexin. Converts ent-copalyl disphosphate (ent-CPP) to dolabradiene. The polypeptide is Dolabradiene synthase KSL4, chloroplastic (Zea mays (Maize)).